The following is a 252-amino-acid chain: 2-succinyl-6-hydroxy-2,4-cyclohexadiene-1-carboxylate synthase (252 aa).

This sequence belongs to the AB hydrolase superfamily. MenH family. In terms of assembly, monomer.

It catalyses the reaction 5-enolpyruvoyl-6-hydroxy-2-succinyl-cyclohex-3-ene-1-carboxylate = (1R,6R)-6-hydroxy-2-succinyl-cyclohexa-2,4-diene-1-carboxylate + pyruvate. The protein operates within quinol/quinone metabolism; 1,4-dihydroxy-2-naphthoate biosynthesis; 1,4-dihydroxy-2-naphthoate from chorismate: step 3/7. It participates in quinol/quinone metabolism; menaquinone biosynthesis. Catalyzes a proton abstraction reaction that results in 2,5-elimination of pyruvate from 2-succinyl-5-enolpyruvyl-6-hydroxy-3-cyclohexene-1-carboxylate (SEPHCHC) and the formation of 2-succinyl-6-hydroxy-2,4-cyclohexadiene-1-carboxylate (SHCHC). The sequence is that of 2-succinyl-6-hydroxy-2,4-cyclohexadiene-1-carboxylate synthase from Shigella dysenteriae serotype 1 (strain Sd197).